The primary structure comprises 418 residues: Glutamyl-tRNA reductase (418 aa).

Substrate-binding positions include 49–52, Ser109, 114–116, and Gln120; these read TCNR and EPQ. Catalysis depends on Cys50, which acts as the Nucleophile. An NADP(+)-binding site is contributed by 189-194; it reads GAGETI.

The protein belongs to the glutamyl-tRNA reductase family. In terms of assembly, homodimer.

It catalyses the reaction (S)-4-amino-5-oxopentanoate + tRNA(Glu) + NADP(+) = L-glutamyl-tRNA(Glu) + NADPH + H(+). Its pathway is porphyrin-containing compound metabolism; protoporphyrin-IX biosynthesis; 5-aminolevulinate from L-glutamyl-tRNA(Glu): step 1/2. Catalyzes the NADPH-dependent reduction of glutamyl-tRNA(Glu) to glutamate 1-semialdehyde (GSA). The protein is Glutamyl-tRNA reductase of Klebsiella pneumoniae (strain 342).